The chain runs to 290 residues: Inositol-1-monophosphatase (290 aa).

Glu83, Asp104, Ile106, and Asp107 together coordinate Mg(2+). Glu83 lines the substrate pocket. Substrate-binding positions include 106 to 109 (IDGT), Arg206, and Asp235. Residue Asp235 participates in Mg(2+) binding.

Belongs to the inositol monophosphatase superfamily. Mg(2+) is required as a cofactor.

It catalyses the reaction a myo-inositol phosphate + H2O = myo-inositol + phosphate. This chain is Inositol-1-monophosphatase (suhB), found in Mycobacterium bovis (strain ATCC BAA-935 / AF2122/97).